Here is a 321-residue protein sequence, read N- to C-terminus: MTGGLNKDFDWVVAKFEEMIKRETEVSIAIPTIRILIDVIRKSNSTTVVGLQKELEDAVKQLKSCPYNQSISLSSVCDSFIRFVTKRTELDFPNFDTCKSNLVERGEQLSNKSSMSRTKISQLADKFIRDGVTILVHGFSRVVLGLLLHAAFQGKRFSVIVTESRPDSSGYKTAARLQAANIPVKLIMDGGVSRIIDKVDYVLVGAEAIVENGGIVNKIGTYQISIVAKAFKKPFYVAAESFKFTRSYPLNQSDIENLKNDHISEPFKACRSCSSCENPEQLTIDSPTLDYTPPSYITLLFTELGVLTPSAVSDELIKLYC.

The protein belongs to the eIF-2B alpha/beta/delta subunits family. In terms of assembly, component of the translation initiation factor 2B (eIF2B) complex which is a heterodecamer of two sets of five different subunits: alpha, beta, gamma, delta and epsilon. Subunits alpha, beta and delta comprise a regulatory subcomplex and subunits epsilon and gamma comprise a catalytic subcomplex. Within the complex, the hexameric regulatory complex resides at the center, with the two heterodimeric catalytic subcomplexes bound on opposite sides.

It localises to the cytoplasm. It is found in the cytosol. Its function is as follows. Acts as a component of the translation initiation factor 2B (eIF2B) complex, which catalyzes the exchange of GDP for GTP on eukaryotic initiation factor 2 (eIF2) gamma subunit. Its guanine nucleotide exchange factor activity is repressed when bound to eIF2 complex phosphorylated on the alpha subunit, thereby limiting the amount of methionyl-initiator methionine tRNA available to the ribosome and consequently global translation is repressed. This is Translation initiation factor eIF2B subunit alpha (eif2b1) from Dictyostelium discoideum (Social amoeba).